The following is a 474-amino-acid chain: Calcium/calmodulin-dependent protein kinase type IV (474 aa).

Residues Ser-11 and Ser-12 each carry the phosphoserine; by autocatalysis modification. Residues 42 to 296 enclose the Protein kinase domain; sequence FEVESELGRG…TFQALQHPWV (255 aa). ATP-binding positions include 48-56 and Lys-71; that span reads LGRGATSIV. An O-linked (GlcNAc) threonine glycan is attached at Thr-53. A glycan (O-linked (GlcNAc) serine) is linked at Ser-54. An O-linked (GlcNAc) serine glycan is attached at Ser-133. Asp-160 (proton acceptor) is an active-site residue. A glycan (O-linked (GlcNAc) serine) is linked at Ser-185. Phosphothreonine; by CaMKK1 and CaMKK2 is present on Thr-196. Positions 297–336 are autoinhibitory domain; it reads TGKAANFVHMDTAQKKLQEFNARRKLKAAVKAVVASSRLG. A PP2A-binding region spans residues 302-319; the sequence is NFVHMDTAQKKLQEFNAR. Residues 318–337 form a calmodulin-binding region; that stretch reads ARRKLKAAVKAVVASSRLGS. Ser-332 is subject to Phosphoserine; by autocatalysis. A disordered region spans residues 336-474; it reads GSASSSHTNI…PQQDAILPEY (139 aa). Ser-337 is modified (phosphoserine). Residues Ser-340, Ser-341, and Ser-352 are each glycosylated (O-linked (GlcNAc) serine). Residues 342 to 356 show a composition bias toward polar residues; it reads HTNIQESNKASSEAQ. A compositionally biased stretch (basic and acidic residues) spans 360–392; it reads DGKDKTDPLENKMQAGDHEAAKAAADETMKLQS. A compositionally biased stretch (acidic residues) spans 393-413; that stretch reads EEVEEEEGVKEEEEEEEEEEE. The span at 431-454 shows a compositional bias: basic and acidic residues; the sequence is QEMKRNSEETLKSVEEEMDPKAEE. 2 positions are modified to phosphoserine: Ser-437 and Ser-443.

This sequence belongs to the protein kinase superfamily. CAMK Ser/Thr protein kinase family. CaMK subfamily. As to quaternary structure, monomer. Interacts with protein phosphatase 2A (PPP2CA/PPP2CB); the interaction is mutually exclusive with binding to Ca(2+)/calmodulin. In terms of processing, phosphorylated by CaMKK1 and CaMKK2 on Thr-196. Dephosphorylated by protein phosphatase 2A. Autophosphorylated on Ser-11 and Ser-12. Post-translationally, glycosylation at Ser-185 modulates the phosphorylation of CaMK4 at Thr-196 and negatively regulates its activity toward CREB1 in basal conditions and during early inomycin stimulation. The N-terminus of calspermin is blocked. In terms of tissue distribution, isoform 1 is expressed in brain and isoform 2 is testis specific.

The protein localises to the cytoplasm. Its subcellular location is the nucleus. The catalysed reaction is L-seryl-[protein] + ATP = O-phospho-L-seryl-[protein] + ADP + H(+). It catalyses the reaction L-threonyl-[protein] + ATP = O-phospho-L-threonyl-[protein] + ADP + H(+). Its activity is regulated as follows. Activated by Ca(2+)/calmodulin. Binding of calmodulin results in conformational change that relieves intrasteric autoinhibition and allows phosphorylation of Thr-196 within the activation loop by CaMKK1 or CaMKK2. Phosphorylation of Thr-196 results in a 10-20-fold increase in total activity to generate Ca(2+)/calmodulin-independent activity. Autophosphorylation of the N-terminus Ser-11 and Ser-12 is required for full activation. Inactivated by protein phosphatase 2A (PPP2CA/PPP2CB) which dephosphorylates Thr-196, thereby terminating autonomous activity and helping to maintain the enzyme in its autoinhibited state. Its function is as follows. Calcium/calmodulin-dependent protein kinase that operates in the calcium-triggered CaMKK-CaMK4 signaling cascade and regulates, mainly by phosphorylation, the activity of several transcription activators, such as CREB1, MEF2D, JUN and RORA, which play pivotal roles in immune response, inflammation, and memory consolidation. In the thymus, regulates the CD4(+)/CD8(+) double positive thymocytes selection threshold during T-cell ontogeny. In CD4 memory T-cells, is required to link T-cell antigen receptor (TCR) signaling to the production of IL2, IFNG and IL4 (through the regulation of CREB and MEF2). Regulates the differentiation and survival phases of osteoclasts and dendritic cells (DCs). Mediates DCs survival by linking TLR4 and the regulation of temporal expression of BCL2. Phosphorylates the transcription activator CREB1 on 'Ser-133' in hippocampal neuron nuclei and contribute to memory consolidation and long term potentiation (LTP) in the hippocampus. Can activate the MAP kinases MAPK1/ERK2, MAPK8/JNK1 and MAPK14/p38 and stimulate transcription through the phosphorylation of ELK1 and ATF2. Can also phosphorylate in vitro CREBBP, PRM2, MEF2A and STMN1/OP18. In terms of biological role, heat-stable, acidic, calmodulin-binding protein. The protein is Calcium/calmodulin-dependent protein kinase type IV (Camk4) of Rattus norvegicus (Rat).